Here is a 76-residue protein sequence, read N- to C-terminus: Kappa-actitoxin-Avd4c (76 aa).

A signal peptide spans 1-19; the sequence is MNKALFLCLVVLCAAVVFA. The propeptide occupies 20 to 31; that stretch reads AEDLQKAKHAPF. 3 disulfide bridges follow: C37/C72, C39/C65, and C55/C73.

This sequence belongs to the sea anemone type 3 (BDS) potassium channel toxin family. Moderately expressed in the ectodermal tissue from the distal and proximal tentacles, body wall, and oral disk.

The protein resides in the secreted. It localises to the nematocyst. In terms of biological role, blocks Kv3 voltage-gated potassium channels. Reduces blood pressure. This is Kappa-actitoxin-Avd4c from Anemonia viridis (Snakelocks anemone).